A 203-amino-acid chain; its full sequence is Transcriptional regulator GfcR 2 (203 aa).

It belongs to the purine/pyrimidine phosphoribosyltransferase family. GfcR subfamily.

This is Transcriptional regulator GfcR 2 from Methanosarcina acetivorans (strain ATCC 35395 / DSM 2834 / JCM 12185 / C2A).